We begin with the raw amino-acid sequence, 177 residues long: Antigen TyF1 (177 aa).

It belongs to the Dps family. Homodecamer.

The sequence is that of Antigen TyF1 from Treponema pallidum subsp. pertenue (Yaws treponeme).